The primary structure comprises 284 residues: Insulin-like growth factor-binding protein 2 (284 aa).

Positions 1-21 (MGLSRYLLGLLLGVLCTPAPA) are cleaved as a signal peptide. The 84-residue stretch at 23–106 (VLFRCPPCSP…VLGLGTCGKR (84 aa)) folds into the IGFBP N-terminal domain. 6 disulfide bridges follow: Cys-27–Cys-56, Cys-30–Cys-58, Cys-38–Cys-59, Cys-47–Cys-62, Cys-70–Cys-83, and Cys-77–Cys-103. The disordered stretch occupies residues 108–184 (DTEYGSSQER…KSEDKKRPAR (77 aa)). The span at 117–127 (RGTELPEERSD) shows a compositional bias: basic and acidic residues. Residues 136–145 (EAGPAVAGEA) are compositionally biased toward low complexity. The span at 152–180 (KKEMKEIAVTRERANEQQRSKSNKSEDKK) shows a compositional bias: basic and acidic residues. Residues 184-266 (RSLCQLQLDQ…SPTIRGDPEC (83 aa)) enclose the Thyroglobulin type-1 domain. Intrachain disulfides connect Cys-187-Cys-221, Cys-232-Cys-243, and Cys-245-Cys-266. The Cell attachment site motif lies at 261-263 (RGD).

As to quaternary structure, interacts with igf1 and igf2.

It is found in the secreted. In terms of biological role, IGF-binding proteins prolong the half-life of the IGFs and have been shown to either inhibit or stimulate the growth promoting effects of the IGFs on cell culture. They alter the interaction of IGFs with their cell surface receptors. In Xenopus tropicalis (Western clawed frog), this protein is Insulin-like growth factor-binding protein 2.